The following is a 372-amino-acid chain: Aminomethyltransferase (372 aa).

Belongs to the GcvT family. The glycine cleavage system is composed of four proteins: P, T, L and H.

It catalyses the reaction N(6)-[(R)-S(8)-aminomethyldihydrolipoyl]-L-lysyl-[protein] + (6S)-5,6,7,8-tetrahydrofolate = N(6)-[(R)-dihydrolipoyl]-L-lysyl-[protein] + (6R)-5,10-methylene-5,6,7,8-tetrahydrofolate + NH4(+). In terms of biological role, the glycine cleavage system catalyzes the degradation of glycine. The protein is Aminomethyltransferase of Burkholderia mallei (strain NCTC 10247).